Reading from the N-terminus, the 465-residue chain is Pre-mRNA-splicing factor URN1 (465 aa).

Residues methionine 1 to leucine 32 enclose the WW domain. 3 disordered regions span residues glutamate 28–arginine 49, glutamate 144–aspartate 198, and glutamate 266–valine 288. A Phosphoserine modification is found at serine 150. Over residues leucine 160–serine 175 the composition is skewed to polar residues. Residues glycine 176–glutamate 192 are compositionally biased toward acidic residues. In terms of domain architecture, FF spans aspartate 212–glutamate 266. The segment covering glutamate 274–valine 288 has biased composition (acidic residues).

Component of the precatalytic spliceosomal complex B. Interacts with PRP19.

It localises to the nucleus. Functionally, component of the spliceosome involved in mRNA processing. The sequence is that of Pre-mRNA-splicing factor URN1 (URN1) from Saccharomyces cerevisiae (strain ATCC 204508 / S288c) (Baker's yeast).